The sequence spans 163 residues: Putative H/ACA ribonucleoprotein complex subunit 2-like protein (163 aa).

This sequence belongs to the eukaryotic ribosomal protein eL8 family. As to quaternary structure, component of the small nucleolar ribonucleoprotein particle containing H/ACA-type snoRNAs (H/ACA snoRNPs).

Its subcellular location is the nucleus. It localises to the nucleolus. In terms of biological role, required for ribosome biogenesis. Part of a complex which catalyzes pseudouridylation of rRNA. This involves the isomerization of uridine such that the ribose is subsequently attached to C5, instead of the normal N1. Pseudouridine ('psi') residues may serve to stabilize the conformation of rRNAs. This chain is Putative H/ACA ribonucleoprotein complex subunit 2-like protein, found in Caenorhabditis briggsae.